The chain runs to 110 residues: Small ubiquitin-related modifier 3 (110 aa).

Residues Lys5 and Lys7 each participate in a glycyl lysine isopeptide (Lys-Gly) (interchain with G-Cter in SUMO2) cross-link. Lys11 participates in a covalent cross-link: Glycyl lysine isopeptide (Lys-Gly) (interchain with G-Cter in SUMO); alternate. Residue Lys11 forms a Glycyl lysine isopeptide (Lys-Gly) (interchain with G-Cter in SUMO2); alternate linkage. Residues 15-92 (DHINLKVAGQ…IDVFQQQTGG (78 aa)) form the Ubiquitin-like domain. Residues 88-101 (QQTGGSASRGSVPT) are compositionally biased toward polar residues. The disordered stretch occupies residues 88 to 110 (QQTGGSASRGSVPTPNRCPDLCY). A Glycyl lysine isopeptide (Gly-Lys) (interchain with K-? in acceptor proteins) cross-link involves residue Gly92. Residues 93–110 (SASRGSVPTPNRCPDLCY) constitute a propeptide that is removed on maturation.

This sequence belongs to the ubiquitin family. SUMO subfamily. Interacts with SAE2 and UBE2I. Covalently attached to a number of proteins. Interacts with USP25 (via ts SIM domain); the interaction sumoylates USP25 and inhibits its ubiquitin hydrolyzing activity. Interacts with BMAL1. Post-translationally, polymeric chains can be formed through Lys-11 cross-linking. Cleavage of precursor form by SENP1, SENP2 or SENP5 is necessary for function.

It localises to the cytoplasm. The protein localises to the nucleus. It is found in the PML body. Functionally, ubiquitin-like protein which can be covalently attached to target lysines either as a monomer or as a lysine-linked polymer. Does not seem to be involved in protein degradation and may function as an antagonist of ubiquitin in the degradation process. Plays a role in a number of cellular processes such as nuclear transport, DNA replication and repair, mitosis and signal transduction. Covalent attachment to its substrates requires prior activation by the E1 complex SAE1-SAE2 and linkage to the E2 enzyme UBE2I, and can be promoted by an E3 ligase such as PIAS1-4, RANBP2 or CBX4. Plays a role in the regulation of sumoylation status of SETX. This chain is Small ubiquitin-related modifier 3, found in Mus musculus (Mouse).